The chain runs to 213 residues: MDILWDISPPISAATPVWPGDTPVSVERVWRIEAGSPVNVARLTLSPHTGAHCDAPLHYDADGAAIGAVPLDTYVGPCRVIHCIGASPVVRPADVAAALDGVPPRVLLRTYANAPTAHWDSAFCAVAPDTVDLLAAHGVKLIGIDTPSLDPQESKTMDAHHRVHAHRMAILEGIVLDEVPPGDYELIALPLKFATLDASPVRAVLRALPARAA.

Trp-18 provides a ligand contact to substrate. Residues His-48, His-52, and Asp-54 each coordinate Zn(2+). His-58 (proton donor/acceptor) is an active-site residue. The Zn(2+) site is built by His-160 and Glu-172.

The protein belongs to the Cyclase 1 superfamily. KynB family. As to quaternary structure, homodimer. Zn(2+) is required as a cofactor.

It carries out the reaction N-formyl-L-kynurenine + H2O = L-kynurenine + formate + H(+). It participates in amino-acid degradation; L-tryptophan degradation via kynurenine pathway; L-kynurenine from L-tryptophan: step 2/2. Catalyzes the hydrolysis of N-formyl-L-kynurenine to L-kynurenine, the second step in the kynurenine pathway of tryptophan degradation. The sequence is that of Kynurenine formamidase from Burkholderia multivorans (strain ATCC 17616 / 249).